The chain runs to 171 residues: Putative antiporter subunit mnhG2 (171 aa).

Transmembrane regions (helical) follow at residues 11–31 (IAAL…IGIV), 51–71 (VLLT…FFSV), and 72–92 (RLLL…HLVA). A compositionally biased stretch (basic and acidic residues) spans 144 to 156 (DVQKQRQKEKQQE). The disordered stretch occupies residues 144 to 171 (DVQKQRQKEKQQEENIESLSEARRETKD).

This sequence belongs to the CPA3 antiporters (TC 2.A.63) subunit G family. May form a heterooligomeric complex that consists of seven subunits: mnhA2, mnhB2, mnhC2, mnhD2, mnhE2, mnhF2 and mnhG2.

It is found in the cell membrane. This chain is Putative antiporter subunit mnhG2 (mnhG2), found in Staphylococcus haemolyticus (strain JCSC1435).